The sequence spans 262 residues: Small ribosomal subunit protein uS2 (262 aa).

Positions 228–262 are disordered; the sequence is VSNEEVAAEQNINLDDKEESEQAETTEENTSVESN. Residues 243–254 show a composition bias toward acidic residues; sequence DKEESEQAETTE.

The protein belongs to the universal ribosomal protein uS2 family.

The protein is Small ribosomal subunit protein uS2 of Staphylococcus epidermidis (strain ATCC 35984 / DSM 28319 / BCRC 17069 / CCUG 31568 / BM 3577 / RP62A).